The following is a 187-amino-acid chain: CRISPR system Cmr subunit Cmr1-2 (187 aa).

Belongs to the CRISPR system Cmr1 family. In terms of assembly, part of the type III-B Cmr ribonucleoprotein (RNP) complex. This is an elongated RNP with Cmr2 and Cmr3 as the base, with Cmr4 and Cmr5 forming a helical core along the mature crRNA (39 or 45 nt in length), while the complex is capped by Cmr6 and Cmr1. The 5' end of the crRNA is bound to Cmr2 and Cmr3, while Cmr6 and a Cmr1 subunit (Cmr1-1 or Cmr1-2) cap the 3' end of the crRNA. The target RNA lies antiparallel to the crRNA, with its 5' end near Cmr1 and Cmr6 and its 3' end near Cmr2 and Cmr3; major target cleavage occurs nears the junction of Cmr1/Cmr6 and Cmr4/Cmr, with minor cleavage occurring at 6 nt intervals which coincide with the proposed spacing of Cmr4 subunits.

The protein resides in the cytoplasm. Functionally, CRISPR (clustered regularly interspaced short palindromic repeat), is an adaptive immune system that provides protection against mobile genetic elements (viruses, transposable elements and conjugative plasmids). CRISPR clusters contain sequences complementary to antecedent mobile elements and target invading nucleic acids. CRISPR clusters are transcribed and processed into CRISPR RNA (crRNA), formerly called psiRNA (prokaryotic silencing) in this organism. Part of the Cmr ribonucleoprotein complex which has divalent cation-dependent endoribonuclease activity specific for ssRNA complementary to the crRNA (target RNA), generating 5' hydroxy- and 3' phosphate or 2'-3' cyclic phosphate termini. Cmr4 is probably the subunit that cleaves target RNA. Cmr complex does not cleave ssDNA complementary to the crRNA. Cleavage of invading RNA is guided by the crRNA; substrate cleavage occurs a fixed distance (14 nt) from the 3' end of the crRNA. In vitro reconstitution shows Cmr1-2 and Cmr5 are not absolutely necessary for target cleavage. The protein is CRISPR system Cmr subunit Cmr1-2 of Pyrococcus furiosus (strain ATCC 43587 / DSM 3638 / JCM 8422 / Vc1).